Consider the following 193-residue polypeptide: Resuscitation-promoting factor Rpf1 (193 aa).

A signal peptide spans 1-35 (MGRHSTKTSSAFTKLAASTIAFGAAATIMAPSASA).

The protein belongs to the transglycosylase family. Rpf subfamily.

Its subcellular location is the secreted. Its function is as follows. Factor that stimulates resuscitation of dormant cells. Has peptidoglycan (PG) hydrolytic activity. Active in the pM concentration range. Has little to no effect on actively-growing cells. PG fragments could either directly activate the resuscitation pathway of dormant bacteria or serve as a substrate for endogenous Rpf, resulting in low molecular weight products with resuscitation activity. The sequence is that of Resuscitation-promoting factor Rpf1 (rpf1) from Corynebacterium glutamicum (strain ATCC 13032 / DSM 20300 / JCM 1318 / BCRC 11384 / CCUG 27702 / LMG 3730 / NBRC 12168 / NCIMB 10025 / NRRL B-2784 / 534).